We begin with the raw amino-acid sequence, 85 residues long: Inhibitor of dGTPase (85 aa).

In terms of assembly, interacts with host dGTPase/dgt.

Its function is as follows. Plays a role in increasing the intracellular pool of dGTP. Interacts with and inhibits host dGTPase/dgt. The complex made of the host dGTPase and gene 1.2 protein creates a GTP-binding site of high affinity. Subsequent binding of GTP to the enzyme-inhibitor complex inhibits its dissociation. This Escherichia coli (Bacteriophage T7) protein is Inhibitor of dGTPase.